Consider the following 1038-residue polypeptide: Isoleucine--tRNA ligase (1038 aa).

The 'HIGH' region signature appears at 48–58 (PTANGKPHVGH). The 'KMSKS' region motif lies at 590-594 (KMSKS). Lys593 provides a ligand contact to ATP.

Belongs to the class-I aminoacyl-tRNA synthetase family. IleS type 2 subfamily. In terms of assembly, monomer. Zn(2+) is required as a cofactor.

It localises to the cytoplasm. The catalysed reaction is tRNA(Ile) + L-isoleucine + ATP = L-isoleucyl-tRNA(Ile) + AMP + diphosphate. In terms of biological role, catalyzes the attachment of isoleucine to tRNA(Ile). As IleRS can inadvertently accommodate and process structurally similar amino acids such as valine, to avoid such errors it has two additional distinct tRNA(Ile)-dependent editing activities. One activity is designated as 'pretransfer' editing and involves the hydrolysis of activated Val-AMP. The other activity is designated 'posttransfer' editing and involves deacylation of mischarged Val-tRNA(Ile). This chain is Isoleucine--tRNA ligase, found in Clostridium novyi (strain NT).